Here is a 242-residue protein sequence, read N- to C-terminus: uncharacterized protein (242 aa).

8–15 contacts NADP(+); sequence TGASGGIG. Substrate is bound at residue S137. Catalysis depends on Y150, which acts as the Proton acceptor.

This sequence belongs to the short-chain dehydrogenases/reductases (SDR) family.

This is an uncharacterized protein from Bacillus subtilis (strain 168).